The chain runs to 400 residues: NADH-quinone oxidoreductase subunit D (400 aa).

It belongs to the complex I 49 kDa subunit family. As to quaternary structure, NDH-1 is composed of 14 different subunits. Subunits NuoB, C, D, E, F, and G constitute the peripheral sector of the complex.

It is found in the cell inner membrane. The enzyme catalyses a quinone + NADH + 5 H(+)(in) = a quinol + NAD(+) + 4 H(+)(out). In terms of biological role, NDH-1 shuttles electrons from NADH, via FMN and iron-sulfur (Fe-S) centers, to quinones in the respiratory chain. The immediate electron acceptor for the enzyme in this species is believed to be a menaquinone. Couples the redox reaction to proton translocation (for every two electrons transferred, four hydrogen ions are translocated across the cytoplasmic membrane), and thus conserves the redox energy in a proton gradient. This chain is NADH-quinone oxidoreductase subunit D, found in Chlorobium phaeovibrioides (strain DSM 265 / 1930) (Prosthecochloris vibrioformis (strain DSM 265)).